An 88-amino-acid polypeptide reads, in one-letter code: Bombyxin B-8 (88 aa).

A signal peptide spans 1 to 18 (MKTSVIFVLIVLNLMWSG). Disulfide bonds link C28/C74, C40/C87, and C73/C78. Positions 47-65 (GGAQYAPYFWQKAYLGSRG) are cleaved as a propeptide — c peptide like.

This sequence belongs to the insulin family. As to quaternary structure, heterodimer of a B chain and an A chain linked by two disulfide bonds.

It localises to the secreted. In terms of biological role, brain peptide responsible for activation of prothoracic glands to produce ecdysone in insects. The protein is Bombyxin B-8 (BBXB8) of Bombyx mori (Silk moth).